The following is a 247-amino-acid chain: (7aS)-7a-methyl-1,5-dioxo-2,3,5,6,7,7a-hexahydro-1H-indene-carboxyl-CoA hydrolase (247 aa).

The protein belongs to the enoyl-CoA hydratase/isomerase family.

It catalyses the reaction (7aS)-7a-methyl-1,5-dioxo-2,3,5,6,7,7a-hexahydro-1H-indene-carboxyl-CoA + H2O = (3E)-2-(2-carboxylatoethyl)-3-methyl-6-oxocyclohex-1-ene-1-carboxyl-CoA + H(+). It functions in the pathway steroid metabolism; cholesterol degradation. Involved in the final steps of cholesterol and steroid degradation. Catalyzes the hydrolytic ring D opening of (7aS)-7a-methyl-1,5-dioxo-2,3,5,6,7,7a-hexahydro-1H-indene-carboxyl-CoA (HIEC-CoA) to (3E)-2-(2-carboxylatoethyl)-3-methyl-6-oxocyclohex-1-ene-1-carboxyl-CoA (COCHEA-CoA). The polypeptide is (7aS)-7a-methyl-1,5-dioxo-2,3,5,6,7,7a-hexahydro-1H-indene-carboxyl-CoA hydrolase (Mycobacterium tuberculosis (strain ATCC 25618 / H37Rv)).